Here is a 1064-residue protein sequence, read N- to C-terminus: DNA-directed RNA polymerase subunit beta (1064 aa).

The protein belongs to the RNA polymerase beta chain family. As to quaternary structure, in plastids the minimal PEP RNA polymerase catalytic core is composed of four subunits: alpha, beta, beta', and beta''. When a (nuclear-encoded) sigma factor is associated with the core the holoenzyme is formed, which can initiate transcription.

It is found in the plastid. The protein resides in the chloroplast. It catalyses the reaction RNA(n) + a ribonucleoside 5'-triphosphate = RNA(n+1) + diphosphate. Functionally, DNA-dependent RNA polymerase catalyzes the transcription of DNA into RNA using the four ribonucleoside triphosphates as substrates. The sequence is that of DNA-directed RNA polymerase subunit beta from Jasminum nudiflorum (Winter jasmine).